Reading from the N-terminus, the 396-residue chain is Protein btn1 (396 aa).

A run of 8 helical transmembrane segments spans residues 15 to 35, 45 to 65, 76 to 96, 138 to 158, 161 to 181, 234 to 254, 296 to 316, and 321 to 341; these read CFLI…SAAL, GVVL…ASIL, IGFC…SSSV, LAGL…NFSV, TLII…FVLP, FLVY…LLFP, LAIT…LYLT, and FVLF…VNVY.

Belongs to the battenin family.

Its subcellular location is the endoplasmic reticulum membrane. The protein localises to the vacuole membrane. In terms of biological role, involved in vacuolar transport and vacuole pH homeostasis. Also required for cytokinesis. The sequence is that of Protein btn1 from Schizosaccharomyces pombe (strain 972 / ATCC 24843) (Fission yeast).